Here is a 354-residue protein sequence, read N- to C-terminus: Tribbles homolog 3 (354 aa).

The interaction with DDIT3/CHOP stretch occupies residues 1–127; sequence MRATPLAASA…QHVARPTEVL (127 aa). A disordered region spans residues 36–61; that stretch reads RDEPEPGPLPSLLPPSPPPASDLSPA. The span at 41-55 shows a compositional bias: pro residues; that stretch reads PGPLPSLLPPSPPPA. Residues 68-315 form the Protein kinase domain; the sequence is LGPYILLERE…ALGILLHPWL (248 aa). Residues 320 to 333 show a composition bias toward basic and acidic residues; that stretch reads GRVSPPQSDRREMD. The interval 320–354 is disordered; the sequence is GRVSPPQSDRREMDQVVPDGPQLEEAEEGEVGLYG. Residues 341–354 are compositionally biased toward acidic residues; sequence QLEEAEEGEVGLYG.

This sequence belongs to the protein kinase superfamily. CAMK Ser/Thr protein kinase family. Tribbles subfamily. As to quaternary structure, interacts with AKT1, AKT2, MAP2K1 and MAP2K7. Interacts with ATF4. Interacts with DDIT3/CHOP and inhibits its interaction with EP300/P300. Interacts with APOBEC3C. Interacts (via N-terminus) with APOBEC3A. Interacts with RELA. As to expression, highly expressed in liver. Not detected in heart, brain, spleen, lung, skeletal muscle, kidney or testis.

The protein resides in the nucleus. Its function is as follows. Inactive protein kinase which acts as a regulator of the integrated stress response (ISR), a process for adaptation to various stress. Inhibits the transcriptional activity of DDIT3/CHOP and is involved in DDIT3/CHOP-dependent cell death during ER stress. May play a role in programmed neuronal cell death but does not appear to affect non-neuronal cells. Acts as a negative feedback regulator of the ATF4-dependent transcription during the ISR: while TRIB3 expression is promoted by ATF4, TRIB3 protein interacts with ATF4 and inhibits ATF4 transcription activity. Disrupts insulin signaling by binding directly to Akt kinases and blocking their activation. May bind directly to and mask the 'Thr-308' phosphorylation site in AKT1. Interacts with the NF-kappa-B transactivator p65 RELA and inhibits its phosphorylation and thus its transcriptional activation activity. Interacts with MAPK kinases and regulates activation of MAP kinases. Can inhibit APOBEC3A editing of nuclear DNA. The chain is Tribbles homolog 3 (Trib3) from Mus musculus (Mouse).